We begin with the raw amino-acid sequence, 361 residues long: (S)-coclaurine N-methyltransferase (361 aa).

7 residues coordinate S-adenosyl-L-methionine: Ser101, Gly139, Asn163, Gln167, Asp189, Ile190, and Val205. Residue Cys336 is part of the active site.

Belongs to the CFA/CMAS family. As to quaternary structure, homodimer. In terms of tissue distribution, highly expressed in rhizomes. Detected in roots, petioles, flower buds and leaves. Expressed between the developing stele and ground tissues near the root apical meristem, in the immature endodermis, the pericycle and the spokes of developing xylem in the apical region of the root and in the protoderm of leaf primordia in rhizomes.

It is found in the cytoplasm. The catalysed reaction is norreticuline + S-adenosyl-L-methionine = reticuline + S-adenosyl-L-homocysteine + H(+). It carries out the reaction (S)-coclaurine + S-adenosyl-L-methionine = (S)-N-methylcoclaurine + S-adenosyl-L-homocysteine + H(+). It catalyses the reaction heliamine + S-adenosyl-L-methionine = N-methylheliamine + S-adenosyl-L-homocysteine + H(+). The protein operates within alkaloid biosynthesis. Functionally, involved in the biosynthesis of protoberberine alkaloids. N-methyltransferase with a substrate preference for (R,S)-norreticuline but also active with dimethoxytetrahydroisoquinoline. This Thalictrum flavum subsp. glaucum (Yellow meadow rue) protein is (S)-coclaurine N-methyltransferase.